The following is a 432-amino-acid chain: MTRTVKRDENAYARLGWLLVLFGFGGALLWAAFAPLDQGVAVPATVIISGQRKSVQHPLGGVVKHILVRDGQHVEAGEPLIRMEPTQARANVDSLLNRYANARLNQARLQAEYDGRRTLEMPAGLAEQAPLPTLGERLELQRQLLHSRQTALANELSALRANIEGLRAQLEGLRQTEGNQRLQQRLLNSQLSGARDLAEEGYMPRNQLLEQERQLAEVNARLSESSGRFGQIRQSIAEAQMRIAQREEEYRKEVNGQLAETQVNARTLWEELSSARYELRHAEIRAPVSGYVAGLKVFTDGGVIGPGELLMYIVPNSDSLEVEGQLAVNLVDRIHSGLPVEMLFTAFNQSKTPRVTGEVTMVSADRLLDEQNKQPYYALRAQVDAAAMGKLKGLQIRPGMAVQVFVRTGERSLLNYLFKPLFDRAHVALAEN.

The Cytoplasmic portion of the chain corresponds to 1–14 (MTRTVKRDENAYAR). Residues 15–36 (LGWLLVLFGFGGALLWAAFAPL) form a helical membrane-spanning segment. Over 37 to 432 (DQGVAVPATV…DRAHVALAEN (396 aa)) the chain is Periplasmic.

The protein belongs to the membrane fusion protein (MFP) (TC 8.A.1) family.

The protein resides in the cell inner membrane. Involved in the secretion of alkaline protease. This is Alkaline protease secretion protein AprE (aprE) from Pseudomonas aeruginosa (strain ATCC 15692 / DSM 22644 / CIP 104116 / JCM 14847 / LMG 12228 / 1C / PRS 101 / PAO1).